The following is a 118-amino-acid chain: MKRIAFVFSTAPHGSASGREGLDALLATSALTEALGVFFISDGVFQLLPGQKPDAVLARDYIATFKLFDLYDIDQCWICAASLRERGLENVNFVVDATPLEPVALRRELGNYDVILRF.

Belongs to the DsrF/TusC family. Heterohexamer, formed by a dimer of trimers. The hexameric TusBCD complex contains 2 copies each of TusB, TusC and TusD. The TusBCD complex interacts with TusE.

It is found in the cytoplasm. Functionally, part of a sulfur-relay system required for 2-thiolation of 5-methylaminomethyl-2-thiouridine (mnm(5)s(2)U) at tRNA wobble positions. In Salmonella agona (strain SL483), this protein is Protein TusC.